A 912-amino-acid chain; its full sequence is MGFISNAILGKVTGLGTKQIERLREQGRAEPARHRRKLHEYEHTQGSRSHSSKDGSRKDRMSSEDKTRHKKLKHRSRQPGDKPTLPQPETDMVFGGLDKCPLYGVVMPMGHGKTTLAQEEGWIDCDSLITPSTKRRLAADALRKLADGDEYENAMAEMSSMMAKALQVLTPSKPAILLSHSVNLLKICQIPCLAILSLEDGVFEKNLRLRDEAEQCAARISKRHLEAAEGPGRPVITVQDNEHMRTVIYQIAESMDVELGAPRLLHPECSLPPGVGGTEWCDLTELVGMYESGRLPRAVLDYQINAQGLKAYRGYGFTMNDWAATAAHLVDNTCAADGAIPSLDNWPLTLEGIGKTFDMSEDIDGQALLAAHGGEDEAFTLGLLLHWKMYGLKSDTTGRLRLLYYVRRNRWDLVMRKVRQGVLGSGTFMGEPITLAERDILLSLHMLSSTSVSALVAKWRDEKMGYPSSRPSKRLMCHFDDILPHLVVQVPGSDPSYERAAWDVFLSGNLKPLRECAAGLLGECKLKRKHVISYLLGVRLLNEWEDEQGAHRVAREAMKQVATNWFRVGKIRDEWFDLIGAVLDGECRADDPIAQMAVMMTKTSSCQNLSGMPWGVRVAEAVQRIVMVGWCGLQMDQKVVLQQTENGVLPIVLGNREEDYIIELMKLGAPKYMTSVTGSEESVLATMAELADWSRSGVGLVLELVNAGSWLGQMSPKDRIALLANWATRRETTGVDSVLFGEILDRFSRQWLKRKFTPRAAEHLRNLGRISRRDGGLGIAERVYRGTVVPGKDGKSWNGKDAPRIKKEFVERVPKINLVACRNVLTSPKMGFKWNAHSLGMCGALVSCFLMGGDKHDIEGMCATVEGIKKHRVHPLASLPDWEQSYPEGAELDEAIEVGINDCMMMLEQARV.

Composition is skewed to basic and acidic residues over residues 20–32 (IERLREQGRAEPA) and 39–67 (HEYEHTQGSRSHSSKDGSRKDRMSSEDKT). Residues 20-91 (IERLREQGRA…KPTLPQPETD (72 aa)) are disordered. Residues 68–77 (RHKKLKHRSR) are compositionally biased toward basic residues.

This is an uncharacterized protein from Penicillium chrysogenum virus (isolate Caston/2003) (PcV).